The chain runs to 342 residues: Biotin synthase (342 aa).

In terms of domain architecture, Radical SAM core spans 55-274 (NAVQCNQLLN…IALARIMMPK (220 aa)). Residues C70, C74, and C77 each contribute to the [4Fe-4S] cluster site. Positions 114, 145, 205, and 278 each coordinate [2Fe-2S] cluster.

This sequence belongs to the radical SAM superfamily. Biotin synthase family. As to quaternary structure, homodimer. The cofactor is [4Fe-4S] cluster. [2Fe-2S] cluster serves as cofactor.

The catalysed reaction is (4R,5S)-dethiobiotin + (sulfur carrier)-SH + 2 reduced [2Fe-2S]-[ferredoxin] + 2 S-adenosyl-L-methionine = (sulfur carrier)-H + biotin + 2 5'-deoxyadenosine + 2 L-methionine + 2 oxidized [2Fe-2S]-[ferredoxin]. The protein operates within cofactor biosynthesis; biotin biosynthesis; biotin from 7,8-diaminononanoate: step 2/2. Catalyzes the conversion of dethiobiotin (DTB) to biotin by the insertion of a sulfur atom into dethiobiotin via a radical-based mechanism. The sequence is that of Biotin synthase from Rhodopseudomonas palustris (strain BisB5).